Reading from the N-terminus, the 101-residue chain is NADH-quinone oxidoreductase subunit K (101 aa).

3 helical membrane-spanning segments follow: residues 4–24, 30–50, and 65–85; these read LSHY…GIFI, IVIL…LVAF, and FVLT…VVFF.

This sequence belongs to the complex I subunit 4L family. In terms of assembly, NDH-1 is composed of 14 different subunits. Subunits NuoA, H, J, K, L, M, N constitute the membrane sector of the complex.

It is found in the cell inner membrane. It carries out the reaction a quinone + NADH + 5 H(+)(in) = a quinol + NAD(+) + 4 H(+)(out). Its function is as follows. NDH-1 shuttles electrons from NADH, via FMN and iron-sulfur (Fe-S) centers, to quinones in the respiratory chain. The immediate electron acceptor for the enzyme in this species is believed to be ubiquinone. Couples the redox reaction to proton translocation (for every two electrons transferred, four hydrogen ions are translocated across the cytoplasmic membrane), and thus conserves the redox energy in a proton gradient. This chain is NADH-quinone oxidoreductase subunit K, found in Methylobacterium sp. (strain 4-46).